The following is a 208-amino-acid chain: Uracil phosphoribosyltransferase (208 aa).

Residues R78, R103, and 130–138 (DPMLATGGS) each bind 5-phospho-alpha-D-ribose 1-diphosphate. Uracil is bound by residues I193 and 198–200 (GDA). D199 contacts 5-phospho-alpha-D-ribose 1-diphosphate.

It belongs to the UPRTase family. The cofactor is Mg(2+).

The catalysed reaction is UMP + diphosphate = 5-phospho-alpha-D-ribose 1-diphosphate + uracil. It functions in the pathway pyrimidine metabolism; UMP biosynthesis via salvage pathway; UMP from uracil: step 1/1. Allosterically activated by GTP. Functionally, catalyzes the conversion of uracil and 5-phospho-alpha-D-ribose 1-diphosphate (PRPP) to UMP and diphosphate. The chain is Uracil phosphoribosyltransferase from Neisseria meningitidis serogroup B (strain ATCC BAA-335 / MC58).